Reading from the N-terminus, the 317-residue chain is Ribosomal large subunit pseudouridine synthase D (317 aa).

One can recognise an S4 RNA-binding domain in the interval 15-89 (WRLDRALASL…IPLEIVFEDE (75 aa)). Residue Asp-141 is part of the active site.

The protein belongs to the pseudouridine synthase RluA family.

The protein localises to the cytoplasm. The catalysed reaction is uridine(1911/1915/1917) in 23S rRNA = pseudouridine(1911/1915/1917) in 23S rRNA. Responsible for synthesis of pseudouridine from uracil at positions 1911, 1915 and 1917 in 23S ribosomal RNA. This chain is Ribosomal large subunit pseudouridine synthase D, found in Zymomonas mobilis subsp. mobilis (strain ATCC 31821 / ZM4 / CP4).